The primary structure comprises 455 residues: Bifunctional protein GlmU (455 aa).

The segment at 1-230 (MANRFAVILA…FDETIGINDR (230 aa)) is pyrophosphorylase. Residues 9 to 12 (LAAG), Lys-23, Gln-73, and 78 to 79 (GT) contribute to the UDP-N-acetyl-alpha-D-glucosamine site. Asp-103 is a binding site for Mg(2+). 4 residues coordinate UDP-N-acetyl-alpha-D-glucosamine: Gly-140, Glu-155, Asn-170, and Asn-228. A Mg(2+)-binding site is contributed by Asn-228. The linker stretch occupies residues 231–251 (IALAEAEKIMKKRINEQHMRN). The segment at 252–455 (GVSIIDPEQT…KEEYASKFKK (204 aa)) is N-acetyltransferase. The UDP-N-acetyl-alpha-D-glucosamine site is built by Arg-333 and Lys-351. Catalysis depends on His-363, which acts as the Proton acceptor. Residues Tyr-366 and Asn-377 each coordinate UDP-N-acetyl-alpha-D-glucosamine. Residues 386 to 387 (NY), Ala-423, and Arg-440 each bind acetyl-CoA.

The protein in the N-terminal section; belongs to the N-acetylglucosamine-1-phosphate uridyltransferase family. In the C-terminal section; belongs to the transferase hexapeptide repeat family. Homotrimer. Requires Mg(2+) as cofactor.

The protein localises to the cytoplasm. It carries out the reaction alpha-D-glucosamine 1-phosphate + acetyl-CoA = N-acetyl-alpha-D-glucosamine 1-phosphate + CoA + H(+). The enzyme catalyses N-acetyl-alpha-D-glucosamine 1-phosphate + UTP + H(+) = UDP-N-acetyl-alpha-D-glucosamine + diphosphate. It participates in nucleotide-sugar biosynthesis; UDP-N-acetyl-alpha-D-glucosamine biosynthesis; N-acetyl-alpha-D-glucosamine 1-phosphate from alpha-D-glucosamine 6-phosphate (route II): step 2/2. Its pathway is nucleotide-sugar biosynthesis; UDP-N-acetyl-alpha-D-glucosamine biosynthesis; UDP-N-acetyl-alpha-D-glucosamine from N-acetyl-alpha-D-glucosamine 1-phosphate: step 1/1. It functions in the pathway bacterial outer membrane biogenesis; LPS lipid A biosynthesis. Functionally, catalyzes the last two sequential reactions in the de novo biosynthetic pathway for UDP-N-acetylglucosamine (UDP-GlcNAc). The C-terminal domain catalyzes the transfer of acetyl group from acetyl coenzyme A to glucosamine-1-phosphate (GlcN-1-P) to produce N-acetylglucosamine-1-phosphate (GlcNAc-1-P), which is converted into UDP-GlcNAc by the transfer of uridine 5-monophosphate (from uridine 5-triphosphate), a reaction catalyzed by the N-terminal domain. The polypeptide is Bifunctional protein GlmU (Oceanobacillus iheyensis (strain DSM 14371 / CIP 107618 / JCM 11309 / KCTC 3954 / HTE831)).